The chain runs to 271 residues: NAD kinase (271 aa).

Residue D52 is the Proton acceptor of the active site. NAD(+) is bound by residues 52–53, 129–130, R155, D157, and A192; these read DG and NE.

This sequence belongs to the NAD kinase family. A divalent metal cation serves as cofactor.

The protein localises to the cytoplasm. The enzyme catalyses NAD(+) + ATP = ADP + NADP(+) + H(+). Functionally, involved in the regulation of the intracellular balance of NAD and NADP, and is a key enzyme in the biosynthesis of NADP. Catalyzes specifically the phosphorylation on 2'-hydroxyl of the adenosine moiety of NAD to yield NADP. The polypeptide is NAD kinase (Geobacillus stearothermophilus (Bacillus stearothermophilus)).